Reading from the N-terminus, the 58-residue chain is Small ribosomal subunit protein bS21 (58 aa).

The segment at 36–58 is disordered; that stretch reads EHYEKPSVKRKKKSEAARKRKFK. Over residues 43 to 58 the composition is skewed to basic residues; sequence VKRKKKSEAARKRKFK.

Belongs to the bacterial ribosomal protein bS21 family.

This is Small ribosomal subunit protein bS21 from Clostridium kluyveri (strain NBRC 12016).